The sequence spans 149 residues: MEVILLEKVRNLGNLGDKVHVKSGYGRNYLIPQNKAVFATEQNIELFEKRRAELEKKAQQNLANAEQRAAKLNDTTIVISAMASDEGKLYGSVGVNEIKDALIEKQIEISKREIVMPEGPLHSIGNYVVEVHVHSDVVANLQVEIIPAK.

The protein belongs to the bacterial ribosomal protein bL9 family.

In terms of biological role, binds to the 23S rRNA. The polypeptide is Large ribosomal subunit protein bL9 (Legionella pneumophila (strain Lens)).